The primary structure comprises 287 residues: Probable endonuclease 4 (287 aa).

Residues histidine 69, histidine 109, glutamate 144, aspartate 178, histidine 181, histidine 215, aspartate 228, histidine 230, and glutamate 260 each contribute to the Zn(2+) site.

The protein belongs to the AP endonuclease 2 family. The cofactor is Zn(2+).

The catalysed reaction is Endonucleolytic cleavage to 5'-phosphooligonucleotide end-products.. In terms of biological role, endonuclease IV plays a role in DNA repair. It cleaves phosphodiester bonds at apurinic or apyrimidinic (AP) sites, generating a 3'-hydroxyl group and a 5'-terminal sugar phosphate. The sequence is that of Probable endonuclease 4 from Thermotoga maritima (strain ATCC 43589 / DSM 3109 / JCM 10099 / NBRC 100826 / MSB8).